Reading from the N-terminus, the 212-residue chain is Eukaryotic translation initiation factor 4E-1 (212 aa).

Cysteine 125 and cysteine 129 are oxidised to a cystine.

Belongs to the eukaryotic initiation factor 4E family. In terms of assembly, EIF4F is a multi-subunit complex, the composition of which varies with external and internal environmental conditions. It is composed of at least EIF4A, EIF4E and EIF4G. EIF4E is also known to interact with other partners, including pgl-1. Interacts with ifet-1. In terms of tissue distribution, enriched in the germline from L3 larvae to adults; regions of the gonad undergoing spermatogenesis. Expressed in germ granules (P granules); when associated with pgl-1.

The protein localises to the cytoplasm. Functionally, recognizes and binds the 7-methylguanosine-containing mRNA cap during an early step in the initiation of protein synthesis and facilitates ribosome binding by inducing the unwinding of the mRNAs secondary structures. All 5 eIF4E proteins bind monomethyl cap structures. Only ife-1, ife-2 and ife-5 bind trimethyl cap structures which result from trans-splicing. Translation of trimethyl cap structure mRNAs may be regulated by intracellular redox state; disulfide bonds change the width and depth of the cap-binding cavity determining selectivity to mRNA caps. Required for progression through meiotic divisions during spermatogenesis and for the production of viable sperm. It is not required during oogenesis. This is Eukaryotic translation initiation factor 4E-1 (ife-1) from Caenorhabditis elegans.